The following is a 168-amino-acid chain: DAZ-associated protein 2 (168 aa).

The segment covering methionine 1 to tyrosine 13 has biased composition (low complexity). Residues methionine 1–glutamine 25 are disordered. Residues proline 39–tyrosine 42 carry the PPAY motif. The residue at position 77 (serine 77) is a Phosphoserine.

In terms of assembly, interacts with SOX6. Interacts with DAZ1 and DAZL. Interacts with IL17RB. May interact with FAM168B. Interacts with INCA1. Interacts with EIF4G1 and EIF4G2. Interacts (via PPAY motif) with NEDD4 (via WW domains). Interacts with transcription factor TCF4; the interaction results in localization of DAZAP2 to the nucleus. Interacts with transcription factors TCF7 and TCF7L1. Interacts with transcription factor LEF1. Interacts with serine/threonine-protein kinase HIPK2; the interaction results in phosphorylation of DAZAP2 which causes localization of DAZAP2 to the nucleus, reduces interaction of DAZAP2 with HIPK2 and prevents DAZAP2-dependent degradation of HIPK2. Interacts with ubiquitin ligase SIAH1; the interaction is decreased following phosphorylation of DAZAP2 by HIPK2. Interacts with TP53; the interaction is triggered by DNA damage. Ubiquitinated by SMURF2, leading to proteasomal degradation. Ubiquitinated by NEDD4, leading to proteasomal degradation. Post-translationally, following DNA damage, phosphorylated by HIPK2 which promotes DAZAP2 localization to the nucleus, reduces interaction of DAZAP2 with HIPK2 and SIAH1, and prevents DAZAP2-dependent ubiquitination of HIPK2 by E3 ubiquitin-protein ligase SIAH1 and subsequent HIPK2 proteasomal degradation. As to expression, widely expressed. Highly expressed in brain.

Its subcellular location is the cytoplasm. It localises to the nucleus. The protein localises to the nucleus speckle. It is found in the nuclear body. The protein resides in the stress granule. In terms of biological role, in unstressed cells, promotes SIAH1-mediated polyubiquitination and degradation of the serine/threonine-protein kinase HIPK2, probably by acting as a loading factor that potentiates complex formation between HIPK2 and ubiquitin ligase SIAH1. In response to DNA damage, localizes to the nucleus following phosphorylation by HIPK2 and modulates the expression of a subset of TP53/p53 target genes by binding to TP53 at target gene promoters. This limits the expression of a number of cell death-mediating TP53 target genes, reducing DNA damage-induced cell death. Enhances the binding of transcription factor TCF7L2/TCF4, a Wnt signaling pathway effector, to the promoters of target genes. Plays a role in stress granule formation. The protein is DAZ-associated protein 2 (Dazap2) of Mus musculus (Mouse).